A 447-amino-acid polypeptide reads, in one-letter code: D-ribitol-5-phosphate cytidylyltransferase (447 aa).

This sequence belongs to the IspD/TarI cytidylyltransferase family. IspD subfamily. As to quaternary structure, homodimer.

The protein resides in the cytoplasm. It is found in the cytosol. It carries out the reaction D-ribitol 5-phosphate + CTP + H(+) = CDP-L-ribitol + diphosphate. It catalyses the reaction D-ribose 5-phosphate + CTP + H(+) = CDP-D-ribose + diphosphate. The enzyme catalyses D-ribulose 5-phosphate + CTP + H(+) = CDP-D-ribulose + diphosphate. It functions in the pathway protein modification; protein glycosylation. In terms of biological role, cytidylyltransferase required for protein O-linked mannosylation. Catalyzes the formation of CDP-ribitol nucleotide sugar from D-ribitol 5-phosphate. CDP-ribitol is a substrate of FKTN during the biosynthesis of the phosphorylated O-mannosyl trisaccharide (N-acetylgalactosamine-beta-3-N-acetylglucosamine-beta-4-(phosphate-6-)mannose), a carbohydrate structure present in alpha-dystroglycan (DAG1), which is required for binding laminin G-like domain-containing extracellular proteins with high affinity. Shows activity toward other pentose phosphate sugars and mediates formation of CDP-ribulose or CDP-ribose using CTP and ribulose-5-phosphate or ribose-5-phosphate, respectively. Not involved in dolichol production. This is D-ribitol-5-phosphate cytidylyltransferase (Crppa) from Rattus norvegicus (Rat).